Here is a 211-residue protein sequence, read N- to C-terminus: Peptide methionine sulfoxide reductase MsrA (211 aa).

The active site involves Cys-52.

This sequence belongs to the MsrA Met sulfoxide reductase family.

It carries out the reaction L-methionyl-[protein] + [thioredoxin]-disulfide + H2O = L-methionyl-(S)-S-oxide-[protein] + [thioredoxin]-dithiol. The enzyme catalyses [thioredoxin]-disulfide + L-methionine + H2O = L-methionine (S)-S-oxide + [thioredoxin]-dithiol. In terms of biological role, has an important function as a repair enzyme for proteins that have been inactivated by oxidation. Catalyzes the reversible oxidation-reduction of methionine sulfoxide in proteins to methionine. The chain is Peptide methionine sulfoxide reductase MsrA from Photobacterium profundum (strain SS9).